The following is a 455-amino-acid chain: Protein YmfN (455 aa).

Belongs to the phage terminase family.

This chain is Protein YmfN (ymfN), found in Escherichia coli (strain K12).